Consider the following 892-residue polypeptide: Alanine--tRNA ligase (892 aa).

Zn(2+) contacts are provided by His-578, His-582, Cys-681, and His-685.

It belongs to the class-II aminoacyl-tRNA synthetase family. Zn(2+) is required as a cofactor.

The protein localises to the cytoplasm. It carries out the reaction tRNA(Ala) + L-alanine + ATP = L-alanyl-tRNA(Ala) + AMP + diphosphate. Its function is as follows. Catalyzes the attachment of alanine to tRNA(Ala) in a two-step reaction: alanine is first activated by ATP to form Ala-AMP and then transferred to the acceptor end of tRNA(Ala). Also edits incorrectly charged Ser-tRNA(Ala) and Gly-tRNA(Ala) via its editing domain. In Cutibacterium acnes (strain DSM 16379 / KPA171202) (Propionibacterium acnes), this protein is Alanine--tRNA ligase.